A 372-amino-acid chain; its full sequence is Glutamate 5-kinase (372 aa).

Lysine 9 lines the ATP pocket. Positions 49, 136, and 148 each coordinate substrate. ATP-binding positions include 168-169 (TD) and 210-216 (TGGMKSK). The PUA domain occupies 276–360 (EGKVFIDDGA…PAIEVIHRDS (85 aa)).

It belongs to the glutamate 5-kinase family.

The protein localises to the cytoplasm. The enzyme catalyses L-glutamate + ATP = L-glutamyl 5-phosphate + ADP. The protein operates within amino-acid biosynthesis; L-proline biosynthesis; L-glutamate 5-semialdehyde from L-glutamate: step 1/2. Catalyzes the transfer of a phosphate group to glutamate to form L-glutamate 5-phosphate. In Oceanobacillus iheyensis (strain DSM 14371 / CIP 107618 / JCM 11309 / KCTC 3954 / HTE831), this protein is Glutamate 5-kinase.